Here is a 243-residue protein sequence, read N- to C-terminus: Urease accessory protein UreF 2 (243 aa).

It belongs to the UreF family. UreD, UreF and UreG form a complex that acts as a GTP-hydrolysis-dependent molecular chaperone, activating the urease apoprotein by helping to assemble the nickel containing metallocenter of UreC. The UreE protein probably delivers the nickel.

The protein resides in the cytoplasm. In terms of biological role, required for maturation of urease via the functional incorporation of the urease nickel metallocenter. This is Urease accessory protein UreF 2 from Brucella suis (strain ATCC 23445 / NCTC 10510).